The following is a 339-amino-acid chain: Adenylosuccinate synthetase (339 aa).

GTP contacts are provided by residues 12 to 18 and 42 to 44; these read GDEGKGS and GHS. Asp13 functions as the Proton acceptor in the catalytic mechanism. Residues Asp13 and Gly42 each coordinate Mg(2+). Residues 13–16, 40–43, Thr127, Arg141, Gln179, Thr194, and Arg256 contribute to the IMP site; these read DEGK and NAGH. His43 acts as the Proton donor in catalysis. 252–258 contacts substrate; it reads TVTGRRR. GTP is bound by residues Arg258, 284-286, and 324-326; these read MLD and KTG.

It belongs to the adenylosuccinate synthetase family. Homodimer. Requires Mg(2+) as cofactor.

Its subcellular location is the cytoplasm. The catalysed reaction is IMP + L-aspartate + GTP = N(6)-(1,2-dicarboxyethyl)-AMP + GDP + phosphate + 2 H(+). The protein operates within purine metabolism; AMP biosynthesis via de novo pathway; AMP from IMP: step 1/2. Its function is as follows. Plays an important role in the de novo pathway of purine nucleotide biosynthesis. Catalyzes the first committed step in the biosynthesis of AMP from IMP. This Pyrococcus horikoshii (strain ATCC 700860 / DSM 12428 / JCM 9974 / NBRC 100139 / OT-3) protein is Adenylosuccinate synthetase.